Reading from the N-terminus, the 140-residue chain is MRHGMSGRKLNRTSSHRKAMFANMAASLLKHEQIKTTLPKAKDLRPIAEKLITLGKGGTLHDRRQAHAILRDDAVVAKLFAVLGPRYKDRQGGYSRILKAGFRYGDAAPMAVIELVDRDPAAKGLDSGPTAEANDDDSEE.

Residues A121–E140 are disordered.

It belongs to the bacterial ribosomal protein bL17 family. Part of the 50S ribosomal subunit. Contacts protein L32.

In Rhodospirillum rubrum (strain ATCC 11170 / ATH 1.1.1 / DSM 467 / LMG 4362 / NCIMB 8255 / S1), this protein is Large ribosomal subunit protein bL17.